Consider the following 630-residue polypeptide: Membrane protein insertase YidC (630 aa).

A run of 5 helical transmembrane segments spans residues 10–30 (LMFL…VMGP), 396–416 (MVGN…LILF), 470–490 (VPML…TVTI), 528–548 (LIGA…LYGF), and 571–591 (FFPI…VIYW).

This sequence belongs to the OXA1/ALB3/YidC family. Type 1 subfamily. In terms of assembly, interacts with the Sec translocase complex via SecD. Specifically interacts with transmembrane segments of nascent integral membrane proteins during membrane integration.

The protein localises to the cell inner membrane. Required for the insertion and/or proper folding and/or complex formation of integral membrane proteins into the membrane. Involved in integration of membrane proteins that insert both dependently and independently of the Sec translocase complex, as well as at least some lipoproteins. Aids folding of multispanning membrane proteins. In Caulobacter sp. (strain K31), this protein is Membrane protein insertase YidC.